The following is a 155-amino-acid chain: Endoribonuclease YbeY (155 aa).

The Zn(2+) site is built by His120, His124, and His130.

The protein belongs to the endoribonuclease YbeY family. Zn(2+) is required as a cofactor.

Its subcellular location is the cytoplasm. Functionally, single strand-specific metallo-endoribonuclease involved in late-stage 70S ribosome quality control and in maturation of the 3' terminus of the 16S rRNA. The polypeptide is Endoribonuclease YbeY (Staphylococcus epidermidis (strain ATCC 12228 / FDA PCI 1200)).